Consider the following 160-residue polypeptide: MSDETATPGADQAPLIINGQYIKDLSFEVPNAPRIFAELDGQPEVPINVDVTATPVGERFFEVSLKFRIEGRIKGKVAFIAELDYCAVATVNLPDEHIHPVLLIEVPRLMFPFARNILADLTRDGGFLPLMIQPLDFAAMYRNRVQAAQSQAAAENAAAN.

Belongs to the SecB family. As to quaternary structure, homotetramer, a dimer of dimers. One homotetramer interacts with 1 SecA dimer.

It is found in the cytoplasm. Functionally, one of the proteins required for the normal export of preproteins out of the cell cytoplasm. It is a molecular chaperone that binds to a subset of precursor proteins, maintaining them in a translocation-competent state. It also specifically binds to its receptor SecA. The chain is Protein-export protein SecB from Rhodospirillum rubrum (strain ATCC 11170 / ATH 1.1.1 / DSM 467 / LMG 4362 / NCIMB 8255 / S1).